The chain runs to 189 residues: Peptide deformylase (189 aa).

Positions 98 and 140 each coordinate Fe cation. Residue Glu141 is part of the active site. His144 serves as a coordination point for Fe cation.

The protein belongs to the polypeptide deformylase family. Requires Fe(2+) as cofactor.

The catalysed reaction is N-terminal N-formyl-L-methionyl-[peptide] + H2O = N-terminal L-methionyl-[peptide] + formate. Removes the formyl group from the N-terminal Met of newly synthesized proteins. Requires at least a dipeptide for an efficient rate of reaction. N-terminal L-methionine is a prerequisite for activity but the enzyme has broad specificity at other positions. The chain is Peptide deformylase from Porphyromonas gingivalis (strain ATCC 33277 / DSM 20709 / CIP 103683 / JCM 12257 / NCTC 11834 / 2561).